Reading from the N-terminus, the 237-residue chain is UPF0173 metal-dependent hydrolase BOV_A0561 (237 aa).

It belongs to the UPF0173 family.

This is UPF0173 metal-dependent hydrolase BOV_A0561 from Brucella ovis (strain ATCC 25840 / 63/290 / NCTC 10512).